Consider the following 265-residue polypeptide: uncharacterized protein (265 aa).

Disordered regions lie at residues 21 to 53 (TLTH…LGPH) and 78 to 133 (HAPS…SSVS). Positions 90-101 (DDDDDDEDDDDS) are enriched in acidic residues. Low complexity predominate over residues 114–123 (SSSSSSSPRV). Residue 137-144 (AILHQGKS) coordinates ATP.

This is an uncharacterized protein from Saccharomyces cerevisiae (strain ATCC 204508 / S288c) (Baker's yeast).